The chain runs to 165 residues: Large ribosomal subunit protein uL10 (165 aa).

The protein belongs to the universal ribosomal protein uL10 family. As to quaternary structure, part of the ribosomal stalk of the 50S ribosomal subunit. The N-terminus interacts with L11 and the large rRNA to form the base of the stalk. The C-terminus forms an elongated spine to which L12 dimers bind in a sequential fashion forming a multimeric L10(L12)X complex.

Its function is as follows. Forms part of the ribosomal stalk, playing a central role in the interaction of the ribosome with GTP-bound translation factors. In Shewanella piezotolerans (strain WP3 / JCM 13877), this protein is Large ribosomal subunit protein uL10.